Consider the following 156-residue polypeptide: Arginine repressor (156 aa).

It belongs to the ArgR family.

It localises to the cytoplasm. It participates in amino-acid biosynthesis; L-arginine biosynthesis [regulation]. In terms of biological role, regulates arginine biosynthesis genes. The protein is Arginine repressor of Shewanella loihica (strain ATCC BAA-1088 / PV-4).